The following is a 710-amino-acid chain: Pentatricopeptide repeat-containing protein At3g14330 (710 aa).

PPR repeat units follow at residues 166-196 (NPKLLSKLITLFSVCRRLDLARKIFDDVTDS), 200-234 (TEKVWAAMAIGYSRNGSPRDALIVYVDMLCSFIEP), 235-269 (GNFSISVALKACVDLKDLRVGRGIHAQIVKRKEKV), 270-304 (DQVVYNVLLKLYMESGLFDDARKVFDGMSERNVVT), 305-331 (WNSLISVLSKKVRVHEMFNLFRKMQEE), 336-370 (SWATLTTILPACSRVAALLTGKEIHAQILKSKEKP), 371-401 (DVPLLNSLMDMYGKCGEVEYSRRVFDVMLTK), 402-436 (DLASWNIMLNCYAINGNIEEVINLFEWMIESGVAP), 437-467 (DGITFVALLSGCSDTGLTEYGLSLFERMKTE), and 473-503 (ALEHYACLVDILGRAGKIKEAVKVIETMPFK). Residues 508 to 583 (IWGSLLNSCR…EAGCSWVQVK (76 aa)) are type E motif. Residues 584 to 615 (DKIQIFVAGGGYEFRNSDEYKKVWTELQEAIE) are type E(+) motif. Residues 616-710 (KSGYSPNTSV…DGICSCKDYW (95 aa)) form a type DYW motif region.

This sequence belongs to the PPR family. PCMP-H subfamily.

This Arabidopsis thaliana (Mouse-ear cress) protein is Pentatricopeptide repeat-containing protein At3g14330 (PCMP-H57).